A 797-amino-acid chain; its full sequence is Sodium/hydrogen exchanger 4 (797 aa).

Residues 1 to 13 (MGPAMFMAFRLWN) are Cytoplasmic-facing. Residues 14 to 28 (WLLLLAVLTRSEATS) constitute an intramembrane region (name=A/M1). The Cytoplasmic segment spans residues 29–69 (YVNESSNPTAQQAPDARFAASSSDPDEGISVFELDYDYVQI). The disordered stretch occupies residues 32 to 52 (ESSNPTAQQAPDARFAASSSD). The name=B/M2 intramembrane region spans 70-90 (PYEVTLWILLASLAKIGFHLY). Residues 91–94 (HRLP) lie on the Cytoplasmic side of the membrane. The chain crosses the membrane as a helical span at residues 95 to 114 (HLMPESCLLIIVGALVGGII). The Extracellular segment spans residues 115–127 (FGTHHKSPPVMDS). Residues 128-148 (SIYFLYLLPPIVLESGYFMPT) traverse the membrane as a helical segment. At 149-154 (RPFFEN) the chain is on the cytoplasmic side. A helical transmembrane segment spans residues 155 to 175 (IGSILWWAGLGALINAFGIGL). Over 176–194 (SLYFICQIKAFGLGDINLL) the chain is Extracellular. A helical membrane pass occupies residues 195 to 215 (HNLLFGSLISAVDPVAVLAVF). The Cytoplasmic segment spans residues 216 to 226 (EEARVNEQLYM). Residues 227 to 247 (MIFGEALLNDGISVVLYNILI) traverse the membrane as a helical segment. Over 248–270 (AFTKMHKFEDIEAVDILAGCARF) the chain is Extracellular. A helical membrane pass occupies residues 271-291 (VIVGCGGVFFGIIFGFISAFI). Over 292–304 (TRFTQNISAIEPL) the chain is Cytoplasmic. A helical membrane pass occupies residues 305–325 (IVFMFSYLSYLAAETLYLSGI). Residues 326-352 (LAITACAVTMKKYVEENVSQTSYTTIK) are Extracellular-facing. N342 is a glycosylation site (N-linked (GlcNAc...) asparagine). A helical membrane pass occupies residues 353 to 373 (YFMKMLSSVSETLIFIFMGVS). The Cytoplasmic portion of the chain corresponds to 374 to 384 (TIGKNHEWNWA). Residues 385–405 (FICFTLLFCQIWRAISVFTLF) form a helical membrane-spanning segment. Residues 406–420 (YVSNQFRTFPFSIKD) are Extracellular-facing. Residues 421-441 (QFIIFYSGVRGAGSFSLAFLL) constitute an intramembrane region (name=L). Residues 442-450 (PLSLFPRKK) lie on the Extracellular side of the membrane. Residues 451–471 (LFVTATLVVTYFTVFFQGITI) traverse the membrane as a helical segment. Topologically, residues 472–797 (GPLVRYLDVR…KSHSPLLHRK (326 aa)) are cytoplasmic. Positions 759 to 769 (YDSGEQTEEET) are enriched in acidic residues. The segment at 759–797 (YDSGEQTEEETSAILSRWTAEHRHSTEHHKSHSPLLHRK) is disordered. Residues 783 to 797 (STEHHKSHSPLLHRK) are compositionally biased toward basic residues.

The protein belongs to the monovalent cation:proton antiporter 1 (CPA1) transporter (TC 2.A.36) family. As to quaternary structure, homodimer; each protomer has one site for sodium and one site for proton binding. Interacts with CHP1 and CHP2. May be phosphorylated. As to expression, expressed in kidney. Expressed in uterus and endometrial epithelial cells. Expressed in the inner segments of inner medullary collecting ducts (IMCD) in kidney. Expressed in AGTR1-positive neurons in organum vasculosum of the lamina terminalis (at protein level).

The protein localises to the basolateral cell membrane. It is found in the apical cell membrane. Its subcellular location is the zymogen granule membrane. It carries out the reaction Na(+)(in) + H(+)(out) = Na(+)(out) + H(+)(in). The catalysed reaction is Na(+)(out) + NH4(+)(in) = Na(+)(in) + NH4(+)(out). Its activity is regulated as follows. Up-regulated in response to high extracellular sodium concentration. Electroneutral antiporter that exchanges sodium for protons or ammonium ions at the basolateral membrane of epithelia to regulate cell volume and intracellular pH upon hypertonic conditions. As part of transcellular ammonia transport in renal tubules, mediates basolateral ammonium extrusion in the medullary thick ascending limb, regulating the corticopapillary ammonium gradient and overall renal acid excretion. Mediates sodium:proton exchange in gastric parietal cells secondary to cAMP-dependent acid secretion and hyperosmolarity. Possibly coupled to chloride:bicarbonate antiporter, enables loading of parietal cells with sodium and chloride ions to maintain cell volume and normal gastric acid secretion. Functions as a sodium sensor in neurons of organum vasculosum of the lamina terminalis where it regulates water intake in response to increased sodium concentration in body fluids. This is Sodium/hydrogen exchanger 4 (Slc9a4) from Mus musculus (Mouse).